Here is a 289-residue protein sequence, read N- to C-terminus: Elongation factor Ts (289 aa).

Residues 82–85 (TDFV) form an involved in Mg(2+) ion dislocation from EF-Tu region.

The protein belongs to the EF-Ts family.

It localises to the cytoplasm. Functionally, associates with the EF-Tu.GDP complex and induces the exchange of GDP to GTP. It remains bound to the aminoacyl-tRNA.EF-Tu.GTP complex up to the GTP hydrolysis stage on the ribosome. This chain is Elongation factor Ts, found in Marinobacter nauticus (strain ATCC 700491 / DSM 11845 / VT8) (Marinobacter aquaeolei).